The sequence spans 271 residues: Enolase-phosphatase E1 (271 aa).

Mg(2+) contacts are provided by Asp16 and Glu18. Residues 150–151 (SS) and Lys199 each bind substrate. Position 226 (Asp226) interacts with Mg(2+).

Belongs to the HAD-like hydrolase superfamily. MasA/MtnC family. In terms of assembly, monomer. Mg(2+) is required as a cofactor.

It is found in the cytoplasm. The protein localises to the nucleus. It catalyses the reaction 5-methylsulfanyl-2,3-dioxopentyl phosphate + H2O = 1,2-dihydroxy-5-(methylsulfanyl)pent-1-en-3-one + phosphate. Its pathway is amino-acid biosynthesis; L-methionine biosynthesis via salvage pathway; L-methionine from S-methyl-5-thio-alpha-D-ribose 1-phosphate: step 3/6. It functions in the pathway amino-acid biosynthesis; L-methionine biosynthesis via salvage pathway; L-methionine from S-methyl-5-thio-alpha-D-ribose 1-phosphate: step 4/6. Its function is as follows. Bifunctional enzyme that catalyzes the enolization of 2,3-diketo-5-methylthiopentyl-1-phosphate (DK-MTP-1-P) into the intermediate 2-hydroxy-3-keto-5-methylthiopentenyl-1-phosphate (HK-MTPenyl-1-P), which is then dephosphorylated to form the acireductone 1,2-dihydroxy-3-keto-5-methylthiopentene (DHK-MTPene). This Candida dubliniensis (strain CD36 / ATCC MYA-646 / CBS 7987 / NCPF 3949 / NRRL Y-17841) (Yeast) protein is Enolase-phosphatase E1.